Here is a 731-residue protein sequence, read N- to C-terminus: DNA ligase (731 aa).

NAD(+) contacts are provided by residues 47-51 (DAEYD), 96-97 (SI), and E133. K135 (N6-AMP-lysine intermediate) is an active-site residue. 4 residues coordinate NAD(+): R156, E192, K313, and K337. Residues C462, C465, C480, and C486 each coordinate Zn(2+). In terms of domain architecture, BRCT spans 645-731 (AATLPLAGMT…RGTPPNAGGA (87 aa)).

This sequence belongs to the NAD-dependent DNA ligase family. LigA subfamily. Mg(2+) is required as a cofactor. The cofactor is Mn(2+).

It carries out the reaction NAD(+) + (deoxyribonucleotide)n-3'-hydroxyl + 5'-phospho-(deoxyribonucleotide)m = (deoxyribonucleotide)n+m + AMP + beta-nicotinamide D-nucleotide.. Functionally, DNA ligase that catalyzes the formation of phosphodiester linkages between 5'-phosphoryl and 3'-hydroxyl groups in double-stranded DNA using NAD as a coenzyme and as the energy source for the reaction. It is essential for DNA replication and repair of damaged DNA. The protein is DNA ligase of Acidovorax sp. (strain JS42).